Here is a 271-residue protein sequence, read N- to C-terminus: Insulin-like growth factor-binding protein 5 (271 aa).

The N-terminal stretch at 1 to 19 is a signal peptide; sequence MVISVVLLLLAAYAVPAQG. Positions 22–102 constitute an IGFBP N-terminal domain; it reads SFVHCEPCDE…LHGRGVCLNE (81 aa). 6 cysteine pairs are disulfide-bonded: cysteine 26/cysteine 52, cysteine 29/cysteine 54, cysteine 37/cysteine 55, cysteine 44/cysteine 58, cysteine 66/cysteine 79, and cysteine 73/cysteine 99. Positions 109–121 are enriched in basic and acidic residues; the sequence is TKIERDSREHEEP. A disordered region spans residues 109-129; it reads TKIERDSREHEEPTTSEMAEE. Phosphoserine is present on serine 115. The region spanning 188 to 262 is the Thyroglobulin type-1 domain; the sequence is QGPCRRHMEA…MEYVDGDFQC (75 aa). 3 disulfide bridges follow: cysteine 191/cysteine 218, cysteine 229/cysteine 240, and cysteine 242/cysteine 262.

Interacts with IGF1; this interaction enhances the growth stimulatory effects of IGF1 on fibroblasts. Interacts with CAV1; this interaction allows trafficking of IGFBP5 from the plasma membrane to the nucleus. Interacts with NCL; this interaction is necessary for IGFBP5 localization to the nucleus. Most abundant in kidney, uterus and gastrocnemius muscle.

It is found in the secreted. It localises to the cytoplasm. The protein localises to the nucleus. Its function is as follows. Multifunctional protein that plays a critical role in regulating the availability of IGFs to their receptors and thereby regulates IGF-mediated cellular processes including proliferation, differentiation, and apoptosis in a cell-type specific manner. Increases the cell proliferation of osteoblasts, intestinal smooth muscle cells and neuroblastoma cells. Enhances adhesion and survival of epithelial cells but decreases adhesion of mesenchymal cells. Once secreted, acts as a major mediator of mTORC1-dependent feedback inhibition of IGF1 signaling. Also plays a role in the induction of extracellular matrix (ECM) production and deposition independently of its nuclear translocation and binding to IGFs. Acts itself as a growth factor that can act independently of IGFs to regulate bone formation. Acts as a ligand for the ROR1 receptor which triggers formation of ROR1/HER2 heterodimer to enhance CREB oncogenic signaling. In Mus musculus (Mouse), this protein is Insulin-like growth factor-binding protein 5 (Igfbp5).